A 577-amino-acid polypeptide reads, in one-letter code: Arginine--tRNA ligase (577 aa).

Positions 122-132 (PNVAKEMHVGH) match the 'HIGH' region motif.

This sequence belongs to the class-I aminoacyl-tRNA synthetase family. As to quaternary structure, monomer.

It is found in the cytoplasm. The enzyme catalyses tRNA(Arg) + L-arginine + ATP = L-arginyl-tRNA(Arg) + AMP + diphosphate. The protein is Arginine--tRNA ligase of Vibrio parahaemolyticus serotype O3:K6 (strain RIMD 2210633).